A 515-amino-acid chain; its full sequence is GMP synthase [glutamine-hydrolyzing] (515 aa).

Positions 6 to 198 (KVIIIDYGSQ…LFHVAKLKAD (193 aa)) constitute a Glutamine amidotransferase type-1 domain. Cys-83 acts as the Nucleophile in catalysis. Catalysis depends on residues His-172 and Glu-174. The region spanning 199-390 (WTMSSFVERA…LGLPDFIIWR (192 aa)) is the GMPS ATP-PPase domain. 226 to 232 (SGGIDST) contacts ATP.

Homodimer.

The enzyme catalyses XMP + L-glutamine + ATP + H2O = GMP + L-glutamate + AMP + diphosphate + 2 H(+). It functions in the pathway purine metabolism; GMP biosynthesis; GMP from XMP (L-Gln route): step 1/1. Its function is as follows. Catalyzes the synthesis of GMP from XMP. This Nitratidesulfovibrio vulgaris (strain DSM 19637 / Miyazaki F) (Desulfovibrio vulgaris) protein is GMP synthase [glutamine-hydrolyzing].